The sequence spans 94 residues: Protein LURE 1.1 (94 aa).

A signal peptide spans 1 to 19 (MKLIFIFLTLLIFVSSCTS). Intrachain disulfides connect Cys58–Cys75, Cys61–Cys82, and Cys65–Cys84. The PRK6 binding stretch occupies residues 67-87 (RRDRYIRTCSFERKLCRCSYS).

This sequence belongs to the DEFL family. As to quaternary structure, binds to PRK6 LRRs. Expressed in the pistil. Detected exclusively in the synergid cells.

It is found in the secreted. Pollen tube attractants guiding pollen tubes to the ovular micropyle. This Arabidopsis thaliana (Mouse-ear cress) protein is Protein LURE 1.1.